The sequence spans 239 residues: Phosphoribosylaminoimidazole-succinocarboxamide synthase (239 aa).

Belongs to the SAICAR synthetase family.

It catalyses the reaction 5-amino-1-(5-phospho-D-ribosyl)imidazole-4-carboxylate + L-aspartate + ATP = (2S)-2-[5-amino-1-(5-phospho-beta-D-ribosyl)imidazole-4-carboxamido]succinate + ADP + phosphate + 2 H(+). It participates in purine metabolism; IMP biosynthesis via de novo pathway; 5-amino-1-(5-phospho-D-ribosyl)imidazole-4-carboxamide from 5-amino-1-(5-phospho-D-ribosyl)imidazole-4-carboxylate: step 1/2. The polypeptide is Phosphoribosylaminoimidazole-succinocarboxamide synthase (Bacillus mycoides (strain KBAB4) (Bacillus weihenstephanensis)).